The primary structure comprises 266 residues: Dickkopf-related protein 1 (266 aa).

The signal sequence occupies residues 1 to 31 (MMALGAAGATRVFVAMVAAALGGHPLLGVSA). The O-linked (GalNAc...) serine glycan is linked to S61. Cystine bridges form between C85/C97, C91/C111, C114/C128, C121/C133, C127/C138, C189/C201, C195/C210, C200/C237, C220/C245, and C239/C263. A DKK-type Cys-1 region spans residues 85–138 (CAEDEECGTDEYCASPTRGGDAGVQICLACRKRRKRCMRHAMCCPGNYCKNGIC). A DKK-type Cys-2 region spans residues 189 to 263 (CLRSSDCASG…ASNSSRLHTC (75 aa)). An N-linked (GlcNAc...) asparagine glycan is attached at N256.

Belongs to the dickkopf family. As to quaternary structure, interacts with LRP6. Interacts (via the C-terminal Cys-rich domain) with LRP5 (via beta-propeller regions 3 and 4); the interaction, enhanced by MESD and or KREMEN, antagonizes Wnt-mediated signaling. Forms a ternary complex with LRP6 and KREM1. Interacts with KREM1. As to expression, placenta.

The protein resides in the secreted. Functionally, antagonizes canonical Wnt signaling by inhibiting LRP5/6 interaction with Wnt and by forming a ternary complex with the transmembrane protein KREMEN that promotes internalization of LRP5/6. DKKs play an important role in vertebrate development, where they locally inhibit Wnt regulated processes such as antero-posterior axial patterning, limb development, somitogenesis and eye formation. In the adult, Dkks are implicated in bone formation and bone disease, cancer and Alzheimer disease. Inhibits the pro-apoptotic function of KREMEN1 in a Wnt-independent manner, and has anti-apoptotic activity. The protein is Dickkopf-related protein 1 (DKK1) of Homo sapiens (Human).